Here is a 344-residue protein sequence, read N- to C-terminus: Dihydroorotate dehydrogenase (quinone) (344 aa).

FMN contacts are provided by residues 65–69 (AGLDK) and T89. K69 is a substrate binding site. Residue 114–118 (NRLGF) coordinates substrate. Positions 145 and 178 each coordinate FMN. N178 contributes to the substrate binding site. S181 functions as the Nucleophile in the catalytic mechanism. Residue N183 coordinates substrate. FMN-binding residues include K223 and T251. Residue 252-253 (NT) coordinates substrate. Residues G274, G303, and 324-325 (YT) each bind FMN.

The protein belongs to the dihydroorotate dehydrogenase family. Type 2 subfamily. In terms of assembly, monomer. FMN is required as a cofactor.

Its subcellular location is the cell membrane. It carries out the reaction (S)-dihydroorotate + a quinone = orotate + a quinol. The protein operates within pyrimidine metabolism; UMP biosynthesis via de novo pathway; orotate from (S)-dihydroorotate (quinone route): step 1/1. Catalyzes the conversion of dihydroorotate to orotate with quinone as electron acceptor. This chain is Dihydroorotate dehydrogenase (quinone), found in Methylibium petroleiphilum (strain ATCC BAA-1232 / LMG 22953 / PM1).